The following is a 96-amino-acid chain: CRISPR-associated endoribonuclease Cas2 1 (96 aa).

Position 8 (aspartate 8) interacts with Mg(2+).

The protein belongs to the CRISPR-associated endoribonuclease Cas2 protein family. In terms of assembly, homodimer, forms a heterotetramer with a Cas1 homodimer. The cofactor is Mg(2+).

Its function is as follows. CRISPR (clustered regularly interspaced short palindromic repeat), is an adaptive immune system that provides protection against mobile genetic elements (viruses, transposable elements and conjugative plasmids). CRISPR clusters contain sequences complementary to antecedent mobile elements and target invading nucleic acids. CRISPR clusters are transcribed and processed into CRISPR RNA (crRNA). Functions as a ssRNA-specific endoribonuclease. Involved in the integration of spacer DNA into the CRISPR cassette. In Moorella thermoacetica (strain ATCC 39073 / JCM 9320), this protein is CRISPR-associated endoribonuclease Cas2 1.